The primary structure comprises 199 residues: V-type ATP synthase subunit E (199 aa).

It belongs to the V-ATPase E subunit family.

Its function is as follows. Produces ATP from ADP in the presence of a proton gradient across the membrane. The protein is V-type ATP synthase subunit E (atpE) of Borreliella burgdorferi (strain ATCC 35210 / DSM 4680 / CIP 102532 / B31) (Borrelia burgdorferi).